A 2078-amino-acid polypeptide reads, in one-letter code: Nascent polypeptide-associated complex subunit alpha, muscle-specific form (2078 aa).

Disordered stretches follow at residues 1 to 21, 37 to 96, 595 to 614, and 732 to 1944; these read MPGEATETVPATEQELPQPQA, ALGQ…LGTA, LGEPLPIGKPASSMTSPLGV, and KSVP…KAMS. Composition is skewed to polar residues over residues 9-21 and 60-75; these read VPATEQELPQPQA and AANQASPFPSPSTIAS. Residues 775–786 are compositionally biased toward low complexity; that stretch reads SGASATASSKGT. Over residues 837–847 the composition is skewed to polar residues; it reads PENSLSFQGSK. S917 is modified (phosphoserine). Positions 933–1020 are enriched in pro residues; it reads SPSPKGAPTP…PPAVTPPSPK (88 aa). A compositionally biased stretch (low complexity) spans 1045 to 1067; sequence GSPAATPLPKGAPTTPAATLPSP. Positions 1080–1113 are enriched in pro residues; the sequence is PTPPAATPPSPKGGPATPSPKGAPMPPAATPPSP. The segment covering 1114–1130 has biased composition (low complexity); the sequence is KGGLATPPHKGAPTTPA. Composition is skewed to pro residues over residues 1131-1147 and 1154-1170; these read ATPPSPKGGLATPPPKG. S1181 bears the Phosphoserine mark. Composition is skewed to low complexity over residues 1183–1199, 1206–1222, and 1229–1245; these read KGGLATPSPKGAPTTPA. Composition is skewed to pro residues over residues 1246 to 1270 and 1292 to 1344; these read ATPPSPKGGPATPPPKGAPTPPAAT and VTPP…PSPK. Positions 1345–1366 are enriched in low complexity; that stretch reads GTPTLPATTPSSKGGPTTPSSK. Phosphoserine is present on residues S1397 and S1474. Residues 1470 to 1481 show a composition bias toward pro residues; that stretch reads VTPPSPKEPPAP. The span at 1485-1507 shows a compositional bias: low complexity; sequence ATSSSPKKAPATPAPMGAPTLPA. The segment covering 1611 to 1625 has biased composition (pro residues); the sequence is KEAPTPPAVTPPSPE. A compositionally biased stretch (low complexity) spans 1626-1637; it reads KGPATPAPKGTP. Residues 1647–1656 show a composition bias toward polar residues; that stretch reads LKDSPTSPAS. Positions 1744–1756 are enriched in basic and acidic residues; that stretch reads DSSKTAKGKDASH. The segment covering 1794–1811 has biased composition (pro residues); that stretch reads PSPPVSLPLAPSPVPTLP. The short motif at 1841–1845 is the PXLXP element; it reads LPLIP. A compositionally biased stretch (polar residues) spans 1876–1891; the sequence is SAKQPVTKNNKGSGTE. Residues 1892–1905 are compositionally biased toward acidic residues; it reads SDSDESVPELEEQD. Phosphoserine; by ILK1 is present on S1906. The span at 1907 to 1920 shows a compositional bias: low complexity; that stretch reads TQATTQQAQLAAAA. Residues 1932 to 1943 form a required for DNA-binding region; it reads QSRSEKKARKAM. The 66-residue stretch at 1933–1998 folds into the NAC-A/B domain; the sequence is SRSEKKARKA…AKIEDLSQQA (66 aa). S1995 carries the phosphoserine modification. K2005 bears the N6-acetyllysine; alternate mark. Residue K2005 forms a Glycyl lysine isopeptide (Lys-Gly) (interchain with G-Cter in SUMO2); alternate linkage. T2022 carries the post-translational modification Phosphothreonine; by GSK3-beta. At T2024 the chain carries Phosphothreonine. Phosphoserine occurs at positions 2029, 2049, 2054, and 2066. Residues 2039-2078 enclose the UBA domain; that stretch reads VEVKDIELVMSQANVSRAKAVRALKNNSNDIVNAIMELTM.

In terms of assembly, interacts (via PXLXP motif) with the muscle-restricted histone methyltransferase SMYD1 (via MYND-type zinc finger).

Its subcellular location is the cytoplasm. It localises to the nucleus. Functionally, cardiac- and muscle-specific transcription factor. May act to regulate the expression of genes involved in the development of myotubes. Plays a critical role in ventricular cardiomyocyte expansion and regulates postnatal skeletal muscle growth and regeneration. Involved in the organized assembly of thick and thin filaments of myofibril sarcomeres. The protein is Nascent polypeptide-associated complex subunit alpha, muscle-specific form (NACA) of Homo sapiens (Human).